Reading from the N-terminus, the 239-residue chain is Serine protease SplC (239 aa).

Positions 1 to 36 (MNKNIVIKSMAALAILTSVTGINAAVVEETQQIANA) are cleaved as a signal peptide. Catalysis depends on charge relay system residues His-75, Asp-113, and Ser-193.

It belongs to the peptidase S1B family.

The protein localises to the secreted. The chain is Serine protease SplC (splC) from Staphylococcus aureus (strain MW2).